The sequence spans 73 residues: Large ribosomal subunit protein bL31 (73 aa).

4 residues coordinate Zn(2+): cysteine 16, cysteine 18, cysteine 37, and cysteine 40.

Belongs to the bacterial ribosomal protein bL31 family. Type A subfamily. In terms of assembly, part of the 50S ribosomal subunit. Zn(2+) serves as cofactor.

Its function is as follows. Binds the 23S rRNA. The protein is Large ribosomal subunit protein bL31 of Hamiltonella defensa subsp. Acyrthosiphon pisum (strain 5AT).